We begin with the raw amino-acid sequence, 371 residues long: Phospho-N-acetylmuramoyl-pentapeptide-transferase (371 aa).

9 helical membrane passes run 19–39 (LYWL…IYSG), 48–68 (IVAP…WAVP), 95–115 (TMGG…WVAA), 119–139 (NLLE…VGWF), 155–175 (AKLR…WLFL), 180–200 (ISGL…FLAI), 227–247 (AIAF…LMIF), 284–304 (AVGL…LFLV), and 349–369 (VVST…GLNA).

The protein belongs to the glycosyltransferase 4 family. MraY subfamily. It depends on Mg(2+) as a cofactor.

It is found in the cell inner membrane. It catalyses the reaction UDP-N-acetyl-alpha-D-muramoyl-L-alanyl-gamma-D-glutamyl-meso-2,6-diaminopimeloyl-D-alanyl-D-alanine + di-trans,octa-cis-undecaprenyl phosphate = di-trans,octa-cis-undecaprenyl diphospho-N-acetyl-alpha-D-muramoyl-L-alanyl-D-glutamyl-meso-2,6-diaminopimeloyl-D-alanyl-D-alanine + UMP. It functions in the pathway cell wall biogenesis; peptidoglycan biosynthesis. Catalyzes the initial step of the lipid cycle reactions in the biosynthesis of the cell wall peptidoglycan: transfers peptidoglycan precursor phospho-MurNAc-pentapeptide from UDP-MurNAc-pentapeptide onto the lipid carrier undecaprenyl phosphate, yielding undecaprenyl-pyrophosphoryl-MurNAc-pentapeptide, known as lipid I. The protein is Phospho-N-acetylmuramoyl-pentapeptide-transferase of Acaryochloris marina (strain MBIC 11017).